Consider the following 474-residue polypeptide: UDP-N-acetylmuramate--L-alanine ligase (474 aa).

116 to 122 is an ATP binding site; it reads GTHGKTT.

This sequence belongs to the MurCDEF family.

The protein localises to the cytoplasm. The catalysed reaction is UDP-N-acetyl-alpha-D-muramate + L-alanine + ATP = UDP-N-acetyl-alpha-D-muramoyl-L-alanine + ADP + phosphate + H(+). The protein operates within cell wall biogenesis; peptidoglycan biosynthesis. In terms of biological role, cell wall formation. This chain is UDP-N-acetylmuramate--L-alanine ligase, found in Hyphomonas neptunium (strain ATCC 15444).